We begin with the raw amino-acid sequence, 316 residues long: Na(+)-translocating NADH-quinone reductase subunit C (316 aa).

A helical membrane pass occupies residues 13 to 33; sequence WYIILFIFVLSLIAGTLLSSV. Residue threonine 280 is modified to FMN phosphoryl threonine.

The protein belongs to the NqrC family. As to quaternary structure, composed of six subunits; NqrA, NqrB, NqrC, NqrD, NqrE and NqrF. FMN is required as a cofactor.

The protein localises to the cell inner membrane. The enzyme catalyses a ubiquinone + n Na(+)(in) + NADH + H(+) = a ubiquinol + n Na(+)(out) + NAD(+). NQR complex catalyzes the reduction of ubiquinone-1 to ubiquinol by two successive reactions, coupled with the transport of Na(+) ions from the cytoplasm to the periplasm. NqrA to NqrE are probably involved in the second step, the conversion of ubisemiquinone to ubiquinol. The sequence is that of Na(+)-translocating NADH-quinone reductase subunit C from Chlamydia trachomatis serovar D (strain ATCC VR-885 / DSM 19411 / UW-3/Cx).